The following is a 32-amino-acid chain: Delta-actitoxin-Eqd1a (32 aa).

It belongs to the sea anemone short toxin (type III) family. Post-translationally, contains 4 disulfide bonds.

The protein localises to the secreted. It localises to the nematocyst. Its function is as follows. Binds specifically to sodium channels (Nav) of the axonal membrane of crayfish and prolongs the falling phase of the action potential. It also increases the maximum rates of rise of both action potential and resting potential. Is only active on crustaceans. This Entacmaea quadricolor (Bubble-tip anemone) protein is Delta-actitoxin-Eqd1a.